Reading from the N-terminus, the 421-residue chain is MVADVLLTHFNQLFCLNDPGHPLTGQEMKKATIVEDGYIAIKDGLIVALGSGEPDAELVGPQTIMRSYKGKIATPGIIDCHTHLVYGGSREHEFAKKLAGVSYLDILAQGGGILSTVRATRSASFDNLYQKSKRLLDYMLLHGVTTVEAKSGYGLDWETEKRQLDVVAALEKDHPIDLVSTFMAAHAIPEEYKGNPKAYLDVIIKDMLPVVKEKNLAEFCDIFCEKNVFTADESRYLLSKAKEMGFKLRIHADEIASIGGVDVAAELSAVSAEHLMMITNDGIAKLIGAGVIGNLLPATTFSLMEDTYAPARKMIDAGMAITLSTDSNPGSCPTANMQFVMQLGCFMLRLTPIEVLNAVTINAAYSVNRQERVGSLTVGKEADIAIFDAPNIDYPFYFFATNLIHQVYKKGQLTVDRGRIL.

Residues His-81 and His-83 each contribute to the Fe(3+) site. His-81 and His-83 together coordinate Zn(2+). 4-imidazolone-5-propanoate contacts are provided by Arg-90, Tyr-153, and His-186. Tyr-153 contributes to the N-formimidoyl-L-glutamate binding site. His-251 lines the Fe(3+) pocket. His-251 is a Zn(2+) binding site. Glu-254 is a 4-imidazolone-5-propanoate binding site. Asp-326 contributes to the Fe(3+) binding site. Asp-326 lines the Zn(2+) pocket. The N-formimidoyl-L-glutamate site is built by Asn-328 and Gly-330. Ser-331 contributes to the 4-imidazolone-5-propanoate binding site.

Belongs to the metallo-dependent hydrolases superfamily. HutI family. The cofactor is Zn(2+). Requires Fe(3+) as cofactor.

The protein localises to the cytoplasm. The enzyme catalyses 4-imidazolone-5-propanoate + H2O = N-formimidoyl-L-glutamate. It functions in the pathway amino-acid degradation; L-histidine degradation into L-glutamate; N-formimidoyl-L-glutamate from L-histidine: step 3/3. Catalyzes the hydrolytic cleavage of the carbon-nitrogen bond in imidazolone-5-propanoate to yield N-formimidoyl-L-glutamate. It is the third step in the universal histidine degradation pathway. This Streptococcus pyogenes serotype M18 (strain MGAS8232) protein is Imidazolonepropionase.